Consider the following 474-residue polypeptide: Shufflon protein A (474 aa).

A constant region region spans residues 1–361; it reads MKKYDRGWAS…TGAILSCQSG (361 aa). Residues 362–474 are variable region; it reads TWKTSGSLNG…GVFSVFGYQT (113 aa).

The sequence is that of Shufflon protein A from Escherichia coli.